Reading from the N-terminus, the 202-residue chain is Dual-action ribosomal maturation protein DarP (202 aa).

Residues 1–13 (MPPMTRNTRNNPN) show a composition bias toward low complexity. Residues 1–39 (MPPMTRNTRNNPNGRFPGAFAPEDEDDLPKSKSQRKRDM) are disordered.

This sequence belongs to the DarP family.

The protein resides in the cytoplasm. Member of a network of 50S ribosomal subunit biogenesis factors which assembles along the 30S-50S interface, preventing incorrect 23S rRNA structures from forming. Promotes peptidyl transferase center (PTC) maturation. The polypeptide is Dual-action ribosomal maturation protein DarP (Cupriavidus metallidurans (strain ATCC 43123 / DSM 2839 / NBRC 102507 / CH34) (Ralstonia metallidurans)).